We begin with the raw amino-acid sequence, 89 residues long: Small ribosomal subunit protein bS16 (89 aa).

It belongs to the bacterial ribosomal protein bS16 family.

The protein is Small ribosomal subunit protein bS16 of Nitrosomonas europaea (strain ATCC 19718 / CIP 103999 / KCTC 2705 / NBRC 14298).